A 715-amino-acid polypeptide reads, in one-letter code: Probable phospholipase YOR022C, mitochondrial (715 aa).

The transit peptide at 1-22 directs the protein to the mitochondrion; it reads MLRFTHRGLPSSTRFRNIFVRL. Disordered stretches follow at residues 161 to 180, 242 to 268, and 311 to 340; these read YPVDKENEGEQKNGSSNKDE, TSTSFKAAKTPQTEVADGSNSSKSRSI, and YNNADNSQGANASSKIEDGKNSGASDRQIR. The span at 242–251 shows a compositional bias: low complexity; sequence TSTSFKAAKT. The segment covering 311-324 has biased composition (polar residues); the sequence is YNNADNSQGANASS. S501 is an active-site residue. The DDHD domain maps to 519-700; the sequence is LEFQVDNLFF…AAFILKEILS (182 aa).

Belongs to the PA-PLA1 family.

Its subcellular location is the mitochondrion. Functionally, probable phospholipase that hydrolyzes phosphatidic acid. This chain is Probable phospholipase YOR022C, mitochondrial, found in Saccharomyces cerevisiae (strain ATCC 204508 / S288c) (Baker's yeast).